We begin with the raw amino-acid sequence, 68 residues long: Glucagon-1 (68 aa).

The protein belongs to the glucagon family.

The protein localises to the secreted. In terms of biological role, promotes hydrolysis of glycogen and lipids, and raises the blood sugar level. The polypeptide is Glucagon-1 (gcg) (Oncorhynchus kisutch (Coho salmon)).